We begin with the raw amino-acid sequence, 89 residues long: Pigment-dispersing hormone peptides (89 aa).

A signal peptide spans 1–22 (MTAMAVSGKLLTALVLSTYILG). Ala86 is subject to Alanine amide.

It belongs to the arthropod PDH family.

Its subcellular location is the secreted. Capable of inducing pigment dispersion in the chromatophores of the fiddler crab Uca pugilator. The polypeptide is Pigment-dispersing hormone peptides (Romalea microptera (Eastern lubber grasshopper)).